The primary structure comprises 785 residues: Arrestin domain-containing protein D (785 aa).

Disordered regions lie at residues 29-69 (QNES…SKYP), 172-205 (ILLPTTTSTQNSTLSPTLLSSNLNSKSSTTTTTT), 326-367 (SNNS…ITNN), 435-486 (SNSN…SDHN), and 608-642 (YSSSGSGSGSGSSNSNSNHSSSNYLNEQEENLDEQ). Residues 173–205 (LLPTTTSTQNSTLSPTLLSSNLNSKSSTTTTTT) are compositionally biased toward low complexity. A compositionally biased stretch (low complexity) spans 435–450 (SNSNSSSSGGSSNKNN). Basic residues predominate over residues 466–478 (SNKKSSGSHRYHY). The span at 608-633 (YSSSGSGSGSGSSNSNSNHSSSNYLN) shows a compositional bias: low complexity. The FYVE-type zinc finger occupies 682–742 (ESSITNCNLC…ICLMCFDAVK (61 aa)). Positions 688, 691, 704, 707, 712, 715, 734, and 737 each coordinate Zn(2+). The segment at 688 to 738 (CNLCDNTFTIIRRTHHCRACGGVFCEACSNQKVCLYGFGVNNKVRICLMCF) adopts an RING-type; degenerate zinc-finger fold.

This sequence belongs to the arrestin family.

The chain is Arrestin domain-containing protein D (adcD) from Dictyostelium discoideum (Social amoeba).